Here is a 410-residue protein sequence, read N- to C-terminus: Transcription factor SPN1 (410 aa).

Positions 1 to 132 are disordered; the sequence is MSTADQEQPK…SRQELEEKLD (132 aa). Thr15 is modified (phosphothreonine). Over residues 20–52 the composition is skewed to polar residues; sequence TASSQKSTINAENENTKQNQSMEPQETSKGTSN. Ser23 carries the post-translational modification Phosphoserine; by ATM or ATR. The residue at position 40 (Ser40) is a Phosphoserine. Basic and acidic residues predominate over residues 53–65; the sequence is DTKDPDNGEKNEE. Ser85 carries the post-translational modification Phosphoserine. The residue at position 86 (Thr86) is a Phosphothreonine. Ser89 bears the Phosphoserine mark. The 78-residue stretch at 219–296 folds into the TFIIS N-terminal domain; the sequence is QSVRIWLEPL…AEWTRPIIGA (78 aa). Positions 318–346 are disordered; it reads KSVMDSAKNRKKKSKSGEDPTSRGSSVQT.

Belongs to the IWS1 family. Interacts with ABD1, RBP1, SPT5 and SPT6.

The protein localises to the nucleus. Functionally, transcription factor involved in RNA polymerase II transcription regulation. May function in both SPT15/TBP post-recruitment and recruitment steps of transcription. The sequence is that of Transcription factor SPN1 (SPN1) from Saccharomyces cerevisiae (strain ATCC 204508 / S288c) (Baker's yeast).